Here is a 204-residue protein sequence, read N- to C-terminus: Ribosomal RNA small subunit methyltransferase G (204 aa).

Gly73, Phe78, and Arg139 together coordinate S-adenosyl-L-methionine.

This sequence belongs to the methyltransferase superfamily. RNA methyltransferase RsmG family.

The protein resides in the cytoplasm. It carries out the reaction guanosine(527) in 16S rRNA + S-adenosyl-L-methionine = N(7)-methylguanosine(527) in 16S rRNA + S-adenosyl-L-homocysteine. Specifically methylates the N7 position of guanine in position 527 of 16S rRNA. This chain is Ribosomal RNA small subunit methyltransferase G, found in Coxiella burnetii (strain Dugway 5J108-111).